The primary structure comprises 55 residues: ATP synthase F(0) complex subunit 8 (55 aa).

Residues 7-24 (NPWFFIMLLSWLTFSLII) traverse the membrane as a helical segment. The segment at 35 to 55 (NPPSNKTTTHTKTTPWTWPWT) is disordered. Residues 37 to 55 (PSNKTTTHTKTTPWTWPWT) show a composition bias toward low complexity.

The protein belongs to the ATPase protein 8 family. As to quaternary structure, component of the ATP synthase complex composed at least of ATP5F1A/subunit alpha, ATP5F1B/subunit beta, ATP5MC1/subunit c (homooctomer), MT-ATP6/subunit a, MT-ATP8/subunit 8, ATP5ME/subunit e, ATP5MF/subunit f, ATP5MG/subunit g, ATP5MK/subunit k, ATP5MJ/subunit j, ATP5F1C/subunit gamma, ATP5F1D/subunit delta, ATP5F1E/subunit epsilon, ATP5PF/subunit F6, ATP5PB/subunit b, ATP5PD/subunit d, ATP5PO/subunit OSCP. ATP synthase complex consists of a soluble F(1) head domain (subunits alpha(3) and beta(3)) - the catalytic core - and a membrane F(0) domain - the membrane proton channel (subunits c, a, 8, e, f, g, k and j). These two domains are linked by a central stalk (subunits gamma, delta, and epsilon) rotating inside the F1 region and a stationary peripheral stalk (subunits F6, b, d, and OSCP).

It localises to the mitochondrion membrane. Subunit 8, of the mitochondrial membrane ATP synthase complex (F(1)F(0) ATP synthase or Complex V) that produces ATP from ADP in the presence of a proton gradient across the membrane which is generated by electron transport complexes of the respiratory chain. ATP synthase complex consist of a soluble F(1) head domain - the catalytic core - and a membrane F(1) domain - the membrane proton channel. These two domains are linked by a central stalk rotating inside the F(1) region and a stationary peripheral stalk. During catalysis, ATP synthesis in the catalytic domain of F(1) is coupled via a rotary mechanism of the central stalk subunits to proton translocation. In vivo, can only synthesize ATP although its ATP hydrolase activity can be activated artificially in vitro. Part of the complex F(0) domain. The chain is ATP synthase F(0) complex subunit 8 from Chaetura pelagica (Chimney swift).